A 438-amino-acid polypeptide reads, in one-letter code: Serine carboxypeptidase-like 5 (438 aa).

An N-terminal signal peptide occupies residues 1-28 (MANYISSVLKSLLLLLHLVFLIQQHVDS). 3 disulfide bridges follow: Cys-87–Cys-328, Cys-251–Cys-263, and Cys-287–Cys-294. Residue Asn-108 is glycosylated (N-linked (GlcNAc...) asparagine). The active site involves Ser-183. Residue Asn-347 is glycosylated (N-linked (GlcNAc...) asparagine). The active site involves Asp-363. An N-linked (GlcNAc...) asparagine glycan is attached at Asn-379. His-416 is an active-site residue.

This sequence belongs to the peptidase S10 family. In terms of tissue distribution, expressed in seedlings, roots, and siliques.

The protein localises to the secreted. Its function is as follows. Probable carboxypeptidase. The protein is Serine carboxypeptidase-like 5 (SCPL5) of Arabidopsis thaliana (Mouse-ear cress).